A 179-amino-acid polypeptide reads, in one-letter code: Large ribosomal subunit protein uL5 (179 aa).

The protein belongs to the universal ribosomal protein uL5 family. In terms of assembly, part of the 50S ribosomal subunit; part of the 5S rRNA/L5/L18/L25 subcomplex. Contacts the 5S rRNA and the P site tRNA. Forms a bridge to the 30S subunit in the 70S ribosome.

Its function is as follows. This is one of the proteins that bind and probably mediate the attachment of the 5S RNA into the large ribosomal subunit, where it forms part of the central protuberance. In the 70S ribosome it contacts protein S13 of the 30S subunit (bridge B1b), connecting the 2 subunits; this bridge is implicated in subunit movement. Contacts the P site tRNA; the 5S rRNA and some of its associated proteins might help stabilize positioning of ribosome-bound tRNAs. This chain is Large ribosomal subunit protein uL5, found in Vibrio campbellii (strain ATCC BAA-1116).